The following is a 390-amino-acid chain: Transforming growth factor beta-1 proprotein (390 aa).

The N-terminal stretch at 1-29 (MPPSGLRLLPLLLPLPWLLVLTPGRPAAG) is a signal peptide. A straightjacket domain region spans residues 30–74 (LSTCKTIDMELVKRKRIEAIRGQILSKLRLASPPSQGEVPPGPLP). The segment at 75-271 (EAVLALYNST…ATPLERAQHL (197 aa)) is arm domain. Asn82, Asn136, and Asn176 each carry an N-linked (GlcNAc...) asparagine glycan. Residues 226-252 (DSKDNKLHVEINGISPKRRGDLGTIHD) are bowtie tail. Positions 244-246 (RGD) match the Cell attachment site motif. Disulfide bonds link Cys285-Cys294, Cys293-Cys356, Cys322-Cys387, and Cys326-Cys389.

This sequence belongs to the TGF-beta family. Homodimer; disulfide-linked. Interacts with the serine proteases, HTRA1 and HTRA3: the interaction with either inhibits TGFB1-mediated signaling and the HTRA protease activity is required for this inhibition. May interact with THSD4; this interaction may lead to sequestration by FBN1 microfibril assembly and attenuation of TGFB signaling. Interacts with CD109, DPT and ASPN. Interacts with EFEMP2. Interacts with TSKU; the interaction contributes to regulation of the hair cycle. Interacts with TGFBR3. In terms of assembly, homodimer; disulfide-linked. Interacts with transforming growth factor beta-1 (TGF-beta-1) chain; interaction is non-covalent and maintains TGF-beta-1 in a latent state; each latency-associated peptide (LAP) monomer interacts with TGF-beta-1 in the other monomer. Interacts with LTBP1; leading to regulation of TGF-beta-1 activation. Interacts with LRRC32/GARP; leading to regulation of TGF-beta-1 activation on the surface of activated regulatory T-cells (Tregs). Interacts with LRRC33/NRROS; leading to regulation of TGF-beta-1 activation in macrophages and microglia. Interacts (via cell attachment site) with integrins ITGAV and ITGB6 (ITGAV:ITGB6), leading to release of the active TGF-beta-1. Interacts with NREP; the interaction results in a decrease in TGFB1 autoinduction. Interacts with HSP90AB1; inhibits latent TGFB1 activation. As to quaternary structure, homodimer; disulfide-linked. Interacts with TGF-beta receptors (TGFBR1 and TGFBR2), leading to signal transduction. In terms of processing, transforming growth factor beta-1 proprotein: The precursor proprotein is cleaved in the Golgi apparatus by FURIN to form Transforming growth factor beta-1 (TGF-beta-1) and Latency-associated peptide (LAP) chains, which remain non-covalently linked, rendering TGF-beta-1 inactive. N-glycosylated. Deglycosylation leads to activation of Transforming growth factor beta-1 (TGF-beta-1); mechanisms triggering deglycosylation-driven activation of TGF-beta-1 are however unclear. Expressed in cardiomyocytes. Weakly expressed in the mammary glands, with a slight increase of expression following onset of involution.

It localises to the secreted. The protein localises to the extracellular space. Its subcellular location is the extracellular matrix. Functionally, transforming growth factor beta-1 proprotein: Precursor of the Latency-associated peptide (LAP) and Transforming growth factor beta-1 (TGF-beta-1) chains, which constitute the regulatory and active subunit of TGF-beta-1, respectively. In terms of biological role, required to maintain the Transforming growth factor beta-1 (TGF-beta-1) chain in a latent state during storage in extracellular matrix. Associates non-covalently with TGF-beta-1 and regulates its activation via interaction with 'milieu molecules', such as LTBP1, LRRC32/GARP and LRRC33/NRROS, that control activation of TGF-beta-1. Interaction with LRRC33/NRROS regulates activation of TGF-beta-1 in macrophages and microglia. Interaction with LRRC32/GARP controls activation of TGF-beta-1 on the surface of activated regulatory T-cells (Tregs). Interaction with integrins (ITGAV:ITGB6 or ITGAV:ITGB8) results in distortion of the Latency-associated peptide chain and subsequent release of the active TGF-beta-1. Multifunctional protein that regulates the growth and differentiation of various cell types and is involved in various processes, such as normal development, immune function, microglia function and responses to neurodegeneration. Activation into mature form follows different steps: following cleavage of the proprotein in the Golgi apparatus, Latency-associated peptide (LAP) and Transforming growth factor beta-1 (TGF-beta-1) chains remain non-covalently linked rendering TGF-beta-1 inactive during storage in extracellular matrix. At the same time, LAP chain interacts with 'milieu molecules', such as LTBP1, LRRC32/GARP and LRRC33/NRROS that control activation of TGF-beta-1 and maintain it in a latent state during storage in extracellular milieus. TGF-beta-1 is released from LAP by integrins (ITGAV:ITGB6 or ITGAV:ITGB8): integrin-binding to LAP stabilizes an alternative conformation of the LAP bowtie tail and results in distortion of the LAP chain and subsequent release of the active TGF-beta-1. Once activated following release of LAP, TGF-beta-1 acts by binding to TGF-beta receptors (TGFBR1 and TGFBR2), which transduce signal. While expressed by many cells types, TGF-beta-1 only has a very localized range of action within cell environment thanks to fine regulation of its activation by Latency-associated peptide chain (LAP) and 'milieu molecules'. Plays an important role in bone remodeling: acts as a potent stimulator of osteoblastic bone formation, causing chemotaxis, proliferation and differentiation in committed osteoblasts. Can promote either T-helper 17 cells (Th17) or regulatory T-cells (Treg) lineage differentiation in a concentration-dependent manner. At high concentrations, leads to FOXP3-mediated suppression of RORC and down-regulation of IL-17 expression, favoring Treg cell development. At low concentrations in concert with IL-6 and IL-21, leads to expression of the IL-17 and IL-23 receptors, favoring differentiation to Th17 cells. Stimulates sustained production of collagen through the activation of CREB3L1 by regulated intramembrane proteolysis (RIP). Mediates SMAD2/3 activation by inducing its phosphorylation and subsequent translocation to the nucleus. Positively regulates odontoblastic differentiation in dental papilla cells, via promotion of IPO7-mediated translocation of phosphorylated SMAD2 to the nucleus and subsequent transcription of target genes. Can induce epithelial-to-mesenchymal transition (EMT) and cell migration in various cell types. This chain is Transforming growth factor beta-1 proprotein, found in Mus musculus (Mouse).